The following is a 492-amino-acid chain: NADH-quinone oxidoreductase subunit N (492 aa).

14 helical membrane-spanning segments follow: residues 5–25 (PMTALLPDALVMAAIVVAWLI), 37–57 (TYFIALLSTVVAGIWFAIDAL), 72–92 (VVDPFASVMKAVVSLGYAVSI), 104–124 (LYEGNFFLLGMFSLLGQLVMI), 129–149 (FLTLYLGLELMSLSLYAAIAL), 164–184 (YVLGALASGFLLYGISMLYGA), 205–225 (VVLLFGVIFIVAGVAFKMGAV), 239–259 (PTAMTLIVGGGPKVAAFAWGL), 276–295 (MLVILAALSLIVGNITGIVQ), 302–322 (LAYSAISNMGFVLLGLLAGVV), 337–357 (MFYSIVYLITTLGSFGVVMLL), 380–400 (FAFVMMVMMFSLAGIPPAVGF), 414–434 (GLTWLAVLAVITSLFGAFYYL), and 466–486 (VAVLVLGIVPGPLMSICLNAI).

Belongs to the complex I subunit 2 family. NDH-1 is composed of 14 different subunits. Subunits NuoA, H, J, K, L, M, N constitute the membrane sector of the complex.

It localises to the cell inner membrane. It carries out the reaction a quinone + NADH + 5 H(+)(in) = a quinol + NAD(+) + 4 H(+)(out). In terms of biological role, NDH-1 shuttles electrons from NADH, via FMN and iron-sulfur (Fe-S) centers, to quinones in the respiratory chain. The immediate electron acceptor for the enzyme in this species is believed to be ubiquinone. Couples the redox reaction to proton translocation (for every two electrons transferred, four hydrogen ions are translocated across the cytoplasmic membrane), and thus conserves the redox energy in a proton gradient. The polypeptide is NADH-quinone oxidoreductase subunit N (Paraburkholderia phymatum (strain DSM 17167 / CIP 108236 / LMG 21445 / STM815) (Burkholderia phymatum)).